The chain runs to 315 residues: MASVKEGDYQALKEEIKKIMKQPGYDDGSAGPVLVRLAWHASGNFSLVEHNGGSNGAGMRFPPESVDPANAGLHYAISFLLPLQSANSWISHADLWTLAGVTAIEAMGGPQIPWEPGRLDYESEQAAVEHRGDVSNRLPDGALGAAHIRDVFGRMGFSDQEIVALSGAHNLGRCHADRSGFDGPWVVNPTRFSNQYFKLLLPGTRLMMLPTDMALIEDPSFRPWVEKYAADQNLFFKDFANAFGKLIELGVDRDDTGFARLAKKAAEEGKPLDKTAPPAGDETCPVSGAVGGGVQRAAGGGGCPFMAMQNREAKL.

The Proton acceptor role is filled by H40. Residue H169 coordinates heme b. W185 (tryptophan radical intermediate) is an active-site residue. Positions 267 to 286 are disordered; that stretch reads EEGKPLDKTAPPAGDETCPV.

This sequence belongs to the peroxidase family. Cytochrome c peroxidase subfamily. The cofactor is heme b.

Its function is as follows. Destroys radicals which are normally produced within the cells and which are toxic to biological systems. The chain is Putative heme-binding peroxidase from Cryptococcus neoformans var. neoformans serotype D (strain B-3501A) (Filobasidiella neoformans).